The primary structure comprises 360 residues: Protein Wnt-2 (360 aa).

Residues 1 to 25 (MNAPLGGIWLWLPLLLTWLTPEVNS) form the signal peptide. Cystine bridges form between C76–C87, C127–C135, C137–C157, C206–C220, C208–C215, C278–C309, C294–C304, C308–C348, C324–C339, C326–C336, and C331–C332. The O-palmitoleoyl serine; by PORCN moiety is linked to residue S212. N295 is a glycosylation site (N-linked (GlcNAc...) asparagine).

The protein belongs to the Wnt family. Post-translationally, palmitoleoylation is required for efficient binding to frizzled receptors. Depalmitoleoylation leads to Wnt signaling pathway inhibition. Expressed in brain in the thalamus, in fetal and adult lung and in placenta.

It localises to the secreted. The protein resides in the extracellular space. It is found in the extracellular matrix. Ligand for members of the frizzled family of seven transmembrane receptors. Functions in the canonical Wnt signaling pathway that results in activation of transcription factors of the TCF/LEF family. Functions as a upstream regulator of FGF10 expression. Plays an important role in embryonic lung development. May contribute to embryonic brain development by regulating the proliferation of dopaminergic precursors and neurons. This chain is Protein Wnt-2 (WNT2), found in Homo sapiens (Human).